The sequence spans 238 residues: Ribonuclease PH (238 aa).

Residues Arg86 and 124–126 contribute to the phosphate site; that span reads GTR.

This sequence belongs to the RNase PH family. Homohexameric ring arranged as a trimer of dimers.

It catalyses the reaction tRNA(n+1) + phosphate = tRNA(n) + a ribonucleoside 5'-diphosphate. Phosphorolytic 3'-5' exoribonuclease that plays an important role in tRNA 3'-end maturation. Removes nucleotide residues following the 3'-CCA terminus of tRNAs; can also add nucleotides to the ends of RNA molecules by using nucleoside diphosphates as substrates, but this may not be physiologically important. Probably plays a role in initiation of 16S rRNA degradation (leading to ribosome degradation) during starvation. This Rhizobium rhizogenes (strain K84 / ATCC BAA-868) (Agrobacterium radiobacter) protein is Ribonuclease PH.